A 232-amino-acid chain; its full sequence is Probable metallo-hydrolase M6_Spy0554 (232 aa).

Zn(2+)-binding residues include His75, His77, Asp79, His80, His155, Asp174, and His215.

The cofactor is Zn(2+).

This chain is Probable metallo-hydrolase M6_Spy0554, found in Streptococcus pyogenes serotype M6 (strain ATCC BAA-946 / MGAS10394).